Here is an 85-residue protein sequence, read N- to C-terminus: RNA-binding protein Hfq (85 aa).

A Sm domain is found at 9–68 (DPFLNELRKEKVPVSVFLVNGIKLHGIIDSFDQYVVMLKNSITQMVYKHAISTVVPSRMV).

The protein belongs to the Hfq family. In terms of assembly, homohexamer.

Its function is as follows. RNA chaperone that binds small regulatory RNA (sRNAs) and mRNAs to facilitate mRNA translational regulation in response to envelope stress, environmental stress and changes in metabolite concentrations. Also binds with high specificity to tRNAs. This is RNA-binding protein Hfq from Legionella pneumophila (strain Paris).